The chain runs to 169 residues: Group 2 truncated hemoglobin 3-2 (169 aa).

His99 provides a ligand contact to heme b.

Belongs to the truncated hemoglobin family. Group II subfamily. Homodimer when ferric.

In terms of biological role, hemoglobin-like protein that exhibits an unusual concentration-independent binding of O(2) and CO. Required for general plant development and during nodulation. May promote shoot organogenesis from root explants. The polypeptide is Group 2 truncated hemoglobin 3-2 (Medicago truncatula (Barrel medic)).